Consider the following 259-residue polypeptide: Thiazole synthase (259 aa).

Lysine 99 (schiff-base intermediate with DXP) is an active-site residue. 1-deoxy-D-xylulose 5-phosphate-binding positions include glycine 160, 186 to 187, and 208 to 209; these read AG and NT.

Belongs to the ThiG family. As to quaternary structure, homotetramer. Forms heterodimers with either ThiH or ThiS.

The protein resides in the cytoplasm. The enzyme catalyses [ThiS sulfur-carrier protein]-C-terminal-Gly-aminoethanethioate + 2-iminoacetate + 1-deoxy-D-xylulose 5-phosphate = [ThiS sulfur-carrier protein]-C-terminal Gly-Gly + 2-[(2R,5Z)-2-carboxy-4-methylthiazol-5(2H)-ylidene]ethyl phosphate + 2 H2O + H(+). Its pathway is cofactor biosynthesis; thiamine diphosphate biosynthesis. In terms of biological role, catalyzes the rearrangement of 1-deoxy-D-xylulose 5-phosphate (DXP) to produce the thiazole phosphate moiety of thiamine. Sulfur is provided by the thiocarboxylate moiety of the carrier protein ThiS. In vitro, sulfur can be provided by H(2)S. The protein is Thiazole synthase of Porphyromonas gingivalis (strain ATCC 33277 / DSM 20709 / CIP 103683 / JCM 12257 / NCTC 11834 / 2561).